We begin with the raw amino-acid sequence, 159 residues long: Ecotin (159 aa).

The first 22 residues, 1-22, serve as a signal peptide directing secretion; the sequence is MRPTPMTAILALTLAAAAPAMA. Cysteine 68 and cysteine 105 are disulfide-bonded.

It belongs to the protease inhibitor I11 (ecotin) family. Homodimer.

The protein resides in the periplasm. In terms of biological role, general inhibitor of family S1 serine proteases. This chain is Ecotin, found in Pseudomonas putida (strain GB-1).